A 474-amino-acid chain; its full sequence is MNFVTTIGLEVHVELKTNSKIFSPSPVQFGSEPNANTNVIDWGYPGVLPTPNKGVVEAGIKAATALHAEIEHHTYFDRKNYFYPDNPKAYQITQHEKPIAHDGWIEIEVDGKKKKIGIEEMHIEEDAGKNTHENDYSYVDLNRQGTPLIEIVSKPDIASPEEAYAYCEALRQRIQFTGVSDVKMEEGSMRVDVNISIRPAGSDKYGVKTEMKNLNSFNYVRKSLEYEEQRQQQVLMAGGKIQQETRRFDETTGQTILMRVKEGSDDYRYFPEPDIPAVDIDDDWIASVKKTIPEMPGSRRERYINEFGLTAYDAGVLTQTKEMSDFFDATVAEGADPKLASNYLQGDVNAYLNEHKVDLLATDLTPTNLAGMIKMISDETISSKIAKKVFKAIMAGSEPVQWVNDKGLVQLSDPAKLQPIVDDVLDNNQQSIDDFKNGKDRAVGFLVGQIMKKTRGQANPKVVNQLLMTSLKAR.

This sequence belongs to the GatB/GatE family. GatB subfamily. As to quaternary structure, heterotrimer of A, B and C subunits.

The enzyme catalyses L-glutamyl-tRNA(Gln) + L-glutamine + ATP + H2O = L-glutaminyl-tRNA(Gln) + L-glutamate + ADP + phosphate + H(+). It carries out the reaction L-aspartyl-tRNA(Asn) + L-glutamine + ATP + H2O = L-asparaginyl-tRNA(Asn) + L-glutamate + ADP + phosphate + 2 H(+). Allows the formation of correctly charged Asn-tRNA(Asn) or Gln-tRNA(Gln) through the transamidation of misacylated Asp-tRNA(Asn) or Glu-tRNA(Gln) in organisms which lack either or both of asparaginyl-tRNA or glutaminyl-tRNA synthetases. The reaction takes place in the presence of glutamine and ATP through an activated phospho-Asp-tRNA(Asn) or phospho-Glu-tRNA(Gln). This Lactiplantibacillus plantarum (strain ATCC BAA-793 / NCIMB 8826 / WCFS1) (Lactobacillus plantarum) protein is Aspartyl/glutamyl-tRNA(Asn/Gln) amidotransferase subunit B.